The sequence spans 329 residues: BRISC and BRCA1-A complex member 1 (329 aa).

Methionine 1 bears the N-acetylmethionine mark. A disordered region spans residues 1 to 84 (MEVAEPSSPT…VPPPAPEVQI (84 aa)). A Phosphoserine modification is found at serine 8. Residues 10–19 (TEEEEEEEEH) are compositionally biased toward acidic residues. 4 positions are modified to phosphoserine: serine 29, serine 49, serine 57, and serine 62. Threonine 65 is modified (phosphothreonine). Serine 66 is modified (phosphoserine). The interval 95 to 298 (VIICLDLSEE…LELHNCMAKL (204 aa)) is VWFA-like.

This sequence belongs to the BABAM1 family. In terms of assembly, component of the ARISC complex, at least composed of UIMC1/RAP80, ABRAXAS1, BRCC3/BRCC36, BABAM2 and BABAM1/NBA1. Component of the BRCA1-A complex, at least composed of BRCA1, BARD1, UIMC1/RAP80, ABRAXAS1, BRCC3/BRCC36, BABAM2 and BABAM1/NBA1. In the BRCA1-A complex, interacts directly with ABRAXAS1 and BABAM2. Component of the BRISC complex, at least composed of ABRAXAS2, BRCC3/BRCC36, BABAM2 and BABAM1/NBA1. Identified in a complex with SHMT2 and the other subunits of the BRISC complex.

It localises to the cytoplasm. It is found in the nucleus. In terms of biological role, component of the BRCA1-A complex, a complex that specifically recognizes 'Lys-63'-linked ubiquitinated histones H2A and H2AX at DNA lesions sites, leading to target the BRCA1-BARD1 heterodimer to sites of DNA damage at double-strand breaks (DSBs). The BRCA1-A complex also possesses deubiquitinase activity that specifically removes 'Lys-63'-linked ubiquitin on histones H2A and H2AX. In the BRCA1-A complex, it is required for the complex integrity and its localization at DSBs. Component of the BRISC complex, a multiprotein complex that specifically cleaves 'Lys-63'-linked ubiquitin in various substrates. In these 2 complexes, it is probably required to maintain the stability of BABAM2 and help the 'Lys-63'-linked deubiquitinase activity mediated by BRCC3/BRCC36 component. The BRISC complex is required for normal mitotic spindle assembly and microtubule attachment to kinetochores via its role in deubiquitinating NUMA1. Plays a role in interferon signaling via its role in the deubiquitination of the interferon receptor IFNAR1; deubiquitination increases IFNAR1 activity by enhancing its stability and cell surface expression. Down-regulates the response to bacterial lipopolysaccharide (LPS) via its role in IFNAR1 deubiquitination. In Homo sapiens (Human), this protein is BRISC and BRCA1-A complex member 1 (BABAM1).